Reading from the N-terminus, the 200-residue chain is Holliday junction branch migration complex subunit RuvA (200 aa).

The interval 1–63 (MYAYVKGKLT…EDAQLLYGFS (63 aa)) is domain I. The domain II stretch occupies residues 64–142 (SEEEKDMFLS…ITEEDSDSLL (79 aa)). The segment at 143–149 (QVDATST) is flexible linker. The interval 150–200 (VQDQFVQEAMLALEALGYSKRELAKVEKTLNKNKYDSVDEAVKAGLQLVVS) is domain III.

This sequence belongs to the RuvA family. As to quaternary structure, homotetramer. Forms an RuvA(8)-RuvB(12)-Holliday junction (HJ) complex. HJ DNA is sandwiched between 2 RuvA tetramers; dsDNA enters through RuvA and exits via RuvB. An RuvB hexamer assembles on each DNA strand where it exits the tetramer. Each RuvB hexamer is contacted by two RuvA subunits (via domain III) on 2 adjacent RuvB subunits; this complex drives branch migration. In the full resolvosome a probable DNA-RuvA(4)-RuvB(12)-RuvC(2) complex forms which resolves the HJ.

It is found in the cytoplasm. Functionally, the RuvA-RuvB-RuvC complex processes Holliday junction (HJ) DNA during genetic recombination and DNA repair, while the RuvA-RuvB complex plays an important role in the rescue of blocked DNA replication forks via replication fork reversal (RFR). RuvA specifically binds to HJ cruciform DNA, conferring on it an open structure. The RuvB hexamer acts as an ATP-dependent pump, pulling dsDNA into and through the RuvAB complex. HJ branch migration allows RuvC to scan DNA until it finds its consensus sequence, where it cleaves and resolves the cruciform DNA. The sequence is that of Holliday junction branch migration complex subunit RuvA from Staphylococcus aureus (strain USA300).